The sequence spans 431 residues: Adenylosuccinate synthetase (431 aa).

GTP contacts are provided by residues 13–19 and 41–43; these read GDEGKGK and GHT. D14 (proton acceptor) is an active-site residue. Residues D14 and G41 each coordinate Mg(2+). IMP is bound by residues 14-17, 39-42, T130, R144, Q225, T240, and R304; these read DEGK and NAGH. H42 (proton donor) is an active-site residue. 300–306 lines the substrate pocket; that stretch reads ATTGRKR. Residues R306, 332-334, and 415-417 each bind GTP; these read KLD and STG.

This sequence belongs to the adenylosuccinate synthetase family. Homodimer. Requires Mg(2+) as cofactor.

It localises to the cytoplasm. The catalysed reaction is IMP + L-aspartate + GTP = N(6)-(1,2-dicarboxyethyl)-AMP + GDP + phosphate + 2 H(+). The protein operates within purine metabolism; AMP biosynthesis via de novo pathway; AMP from IMP: step 1/2. Plays an important role in the de novo pathway of purine nucleotide biosynthesis. Catalyzes the first committed step in the biosynthesis of AMP from IMP. This Shewanella frigidimarina (strain NCIMB 400) protein is Adenylosuccinate synthetase.